The following is a 156-amino-acid chain: ATP synthase subunit b (156 aa).

A helical membrane pass occupies residues 7–29 (LIGQSVAFLIFVWFCMKFVWPPL).

Belongs to the ATPase B chain family. F-type ATPases have 2 components, F(1) - the catalytic core - and F(0) - the membrane proton channel. F(1) has five subunits: alpha(3), beta(3), gamma(1), delta(1), epsilon(1). F(0) has three main subunits: a(1), b(2) and c(10-14). The alpha and beta chains form an alternating ring which encloses part of the gamma chain. F(1) is attached to F(0) by a central stalk formed by the gamma and epsilon chains, while a peripheral stalk is formed by the delta and b chains.

The protein resides in the cell inner membrane. Functionally, f(1)F(0) ATP synthase produces ATP from ADP in the presence of a proton or sodium gradient. F-type ATPases consist of two structural domains, F(1) containing the extramembraneous catalytic core and F(0) containing the membrane proton channel, linked together by a central stalk and a peripheral stalk. During catalysis, ATP synthesis in the catalytic domain of F(1) is coupled via a rotary mechanism of the central stalk subunits to proton translocation. Component of the F(0) channel, it forms part of the peripheral stalk, linking F(1) to F(0). The chain is ATP synthase subunit b from Shewanella denitrificans (strain OS217 / ATCC BAA-1090 / DSM 15013).